A 328-amino-acid chain; its full sequence is Alanine racemase (328 aa).

Lys-33 functions as the Proton acceptor; specific for D-alanine in the catalytic mechanism. Lys-33 carries the post-translational modification N6-(pyridoxal phosphate)lysine. Position 118 (Arg-118) interacts with substrate. The active-site Proton acceptor; specific for L-alanine is Tyr-237. Met-283 contributes to the substrate binding site.

It belongs to the alanine racemase family. Pyridoxal 5'-phosphate serves as cofactor.

It catalyses the reaction L-alanine = D-alanine. Its pathway is amino-acid biosynthesis; D-alanine biosynthesis; D-alanine from L-alanine: step 1/1. Catalyzes the interconversion of L-alanine and D-alanine. May also act on other amino acids. This Campylobacter jejuni subsp. jejuni serotype O:6 (strain 81116 / NCTC 11828) protein is Alanine racemase (alr).